The sequence spans 156 residues: Small ribosomal subunit protein uS7 (156 aa).

It belongs to the universal ribosomal protein uS7 family. As to quaternary structure, part of the 30S ribosomal subunit. Contacts proteins S9 and S11.

Its function is as follows. One of the primary rRNA binding proteins, it binds directly to 16S rRNA where it nucleates assembly of the head domain of the 30S subunit. Is located at the subunit interface close to the decoding center, probably blocks exit of the E-site tRNA. In Bacillus cytotoxicus (strain DSM 22905 / CIP 110041 / 391-98 / NVH 391-98), this protein is Small ribosomal subunit protein uS7.